A 276-amino-acid polypeptide reads, in one-letter code: MILSGHARLAGVIGYPVAHSRSPRLHGTWLERHGIDGAYLPLAIAPDDFAACVAALAKMGFAGANVTIPHKEAAFAVCDRVADSARRAGAVNTLVFTPTGIEGANTDGSGFLANLRAHGVNPAAGPALVLGAGGAARAIATALQDAGAVVTLCNRSPERAVALARDFGLVHIPWEARSAALADHALVVNTTSLGMAGHNPLELDLARAAPGMAVADIVYVPLETPLLAAARARGLVAVEGLGMLLHQAVPGFAAWFGVTPVVDDALYRAVAADLMG.

Residues 20–22 (SRS) and Thr-67 contribute to the shikimate site. Residue Lys-71 is the Proton acceptor of the active site. Residue Asp-83 coordinates NADP(+). Residues Asn-92 and Asp-107 each coordinate shikimate. Residues 131 to 135 (GAGGA) and Ile-217 contribute to the NADP(+) site. Tyr-219 lines the shikimate pocket. Residue Gly-240 participates in NADP(+) binding.

The protein belongs to the shikimate dehydrogenase family. In terms of assembly, homodimer.

The catalysed reaction is shikimate + NADP(+) = 3-dehydroshikimate + NADPH + H(+). It participates in metabolic intermediate biosynthesis; chorismate biosynthesis; chorismate from D-erythrose 4-phosphate and phosphoenolpyruvate: step 4/7. Involved in the biosynthesis of the chorismate, which leads to the biosynthesis of aromatic amino acids. Catalyzes the reversible NADPH linked reduction of 3-dehydroshikimate (DHSA) to yield shikimate (SA). The chain is Shikimate dehydrogenase (NADP(+)) from Acidiphilium cryptum (strain JF-5).